We begin with the raw amino-acid sequence, 336 residues long: F-box protein At5g50450 (336 aa).

An F-box domain is found at 19-70 (NNHFEDLHDDLIISILRKLATSASSPSDFLTVLSTCKRLNRLGLHPLVLSKA). Zn(2+) is bound by residues H263, C266, C279, C282, C288, C292, H301, and C305. The MYND-type; atypical zinc-finger motif lies at 263–305 (HGGCGRPETRAHEFRRCSVCGKVNYCSRGCQALDWRAKHKVEC).

This chain is F-box protein At5g50450, found in Arabidopsis thaliana (Mouse-ear cress).